The sequence spans 391 residues: tRNA (cytosine(38)-C(5))-methyltransferase (391 aa).

An SAM-dependent MTase C5-type domain is found at 4 to 391 (LRVLELYSGI…VSKLLTVLCE (388 aa)). S-adenosyl-L-methionine contacts are provided by residues 13–15 (IGG), aspartate 34, 57–58 (IE), and serine 76. Cysteine 79 is a catalytic residue. Serine 376 contributes to the S-adenosyl-L-methionine binding site.

It belongs to the class I-like SAM-binding methyltransferase superfamily. C5-methyltransferase family.

The protein localises to the cytoplasm. It catalyses the reaction cytidine(38) in tRNA + S-adenosyl-L-methionine = 5-methylcytidine(38) in tRNA + S-adenosyl-L-homocysteine + H(+). Its function is as follows. Specifically methylates cytosine 38 in the anticodon loop of tRNA(Asp). Has higher activity on tRNA(Asp) modified with queuosine at position 34. The sequence is that of tRNA (cytosine(38)-C(5))-methyltransferase (Trdmt1) from Rattus norvegicus (Rat).